The sequence spans 271 residues: Glutamate racemase (271 aa).

Substrate is bound by residues 12–13 (DS) and 44–45 (YG). Catalysis depends on Cys-75, which acts as the Proton donor/acceptor. Residue 76–77 (NS) participates in substrate binding. Catalysis depends on Cys-185, which acts as the Proton donor/acceptor. 186-187 (TH) provides a ligand contact to substrate.

The protein belongs to the aspartate/glutamate racemases family.

The catalysed reaction is L-glutamate = D-glutamate. Its pathway is cell wall biogenesis; peptidoglycan biosynthesis. Functionally, provides the (R)-glutamate required for cell wall biosynthesis. The sequence is that of Glutamate racemase from Mycobacterium bovis (strain ATCC BAA-935 / AF2122/97).